The sequence spans 1609 residues: MAGLRRPQPGCYCRTAAAVNLLLGVFQVLLPCCRPGGAQGQAIEPLPNVVELWQAEEGELLLPTQGDSEEGLEEPSQEQSFSDKLFSGKGLHFQPSVLDFGIQFLGHPVAKILHAYNPSRDSEVVVNSVFAAAGHFHVPPVPCRVIPAMGKTSFRIIFLPTEEGSIESSLFINTSSYGVLSYHVSGIGTRRISTEGSAKQLPNAYFLLPKVQSIQLSQMQAETTNTSLLQVQLECSLHNKVCQQLKGCYLESDDVLRLQMSIMVTMENFSKEFEENTQHLLDHLSIVYVATDESETSDDSAVNMYILHSGNSLIWIQDIRHFSQRDALSLQFEPVLLPTSTTNFTKIASFTCKATSCDSGIIEDVKKTTHTPTLKACLFSSVAQGYFRMDSSATQFHIETHENTSGLWSIWYRNHFDRSVVLNDVFLSKETKHMLKILNFTGPLFLPPGCWNIFSLKLAVKDIAINLFTNVFLTTNIGAIFAIPLQIYSAPTKEGSLGFEVIAHCGMHYFMGKSKAGNPNWNGSLSLDQSTWNVDSELANKLYERWKKYKNGDVCKRNVLGTTRFAHLKKSKESESFVFFLPRLIAEPGLMLNFSATALRSRMIKYFVVQNPSSWPVSLQLLPLSLYPKPEALVHLLHRWFGTDMQMINFTTGEFQLTEACPYLGTHSEESRFGILHLHLQPLEMKRVGVVFTPADYGKVTSLILIRNNLTVIDMIGVEGFGARELLKVGGRLPGAGGSLRFKVPESTLMDCRRQLKDSKQILSITKNFKVENIGPLPITVSSLKINGYNCQGYGFEVLDCHQFSLDPNTSRDISIVFTPDFTSSWVIRDLSLVTAADLEFRFTLNVTLPHHLLPLCADVVPGPSWEESFWRLTVFFVSLSLLGVILIAFQQAQYILMEFMKTRQRQNASSSSQQNNGPMDVISPHSYKSNCKNFLDTYGPSDKGRGKNCLPVNTPQSRIQNAAKRSPATYGHSQKKHKCSVYYSKHKTSTAAASSTSTTTEEKQTSPLGSSLPAAKEDICTDAMRENWISLRYASGINVNLQKNLTLPKNLLNKEENTLKNTIVFSNPSSECSMKEGIQTCMFPKETDIKTSENTAEFKERELCPLKTSKKLPENHLPRNSPQYHQPDLPEISRKNNGNNQQVPVKNEVDHCENLKKVDTKPSSEKKIHKTSREDMFSEKQDIPFVEQEDPYRKKKLQEKREGNLQNLNWSKSRTCRKNKKRGVAPVSRPPEQSDLKLVCSDFERSELSSDINVRSWCIQESTREVCKADAEIASSLPAAQREAEGYYQKPEKKCVDKFCSDSSSDCGSSSGSVRASRGSWGSWSSTSSSDGDKKPMVDAQHFLPAGDSVSQNDFPSEAPISLNLSHNICNPMTVNSLPQYAEPSCPSLPAGPTGVEEDKGLYSPGDLWPTPPVCVTSSLNCTLENGVPCVIQESAPVHNSFIDWSATCEGQFSSAYCPLELNDYNAFPEENMNYANGFPCPADVQTDFIDHNSQSTWNTPPNMPAAWGHASFISSPPYLTSTRSLSPMSGLFGSIWAPQSDVYENCCPINPTTEHSTHMENQAVVCKEYYPGFNPFRAYMNLDIWTTTANRNANFPLSRDSSYCGNV.

Positions 1–40 are cleaved as a signal peptide; that stretch reads MAGLRRPQPGCYCRTAAAVNLLLGVFQVLLPCCRPGGAQG. The Extracellular portion of the chain corresponds to 41–869; sequence QAIEPLPNVV…VVPGPSWEES (829 aa). N-linked (GlcNAc...) asparagine glycosylation is found at Asn343, Asn439, Asn522, Asn593, Asn709, and Asn846. Residues 696–916 form a required for Wnt-signaling inhibition and LRP6 degradation region; it reads DYGKVTSLIL…QNASSSSQQN (221 aa). The helical transmembrane segment at 870–890 threads the bilayer; that stretch reads FWRLTVFFVSLSLLGVILIAF. Residues 891–1609 are Cytoplasmic-facing; sequence QQAQYILMEF…SRDSSYCGNV (719 aa). Disordered stretches follow at residues 946–974, 991–1014, 1108–1144, 1159–1178, and 1304–1340; these read RGKN…YGHS, TAAA…SSLP, KTSK…NQQV, VDTK…EDMF, and SSSD…PMVD. The segment covering 952–961 has biased composition (polar residues); the sequence is PVNTPQSRIQ. The segment covering 991–1000 has biased composition (low complexity); it reads TAAASSTSTT. Ser1122 is subject to Phosphoserine. Residues 1304 to 1331 show a composition bias toward low complexity; the sequence is SSSDCGSSSGSVRASRGSWGSWSSTSSS.

The protein belongs to the TMEM131 family. In terms of tissue distribution, expressed in thymocytes.

It is found in the cell membrane. The protein localises to the cytoplasm. The protein resides in the endoplasmic reticulum. Functionally, membrane-associated form that antagonizes canonical Wnt signaling by triggering lysosome-dependent degradation of Wnt-activated LRP6. Regulates thymocyte proliferation. This Homo sapiens (Human) protein is Transmembrane protein 131-like.